A 92-amino-acid polypeptide reads, in one-letter code: UPF0335 protein BMEI0289 (92 aa).

It belongs to the UPF0335 family.

The polypeptide is UPF0335 protein BMEI0289 (Brucella melitensis biotype 1 (strain ATCC 23456 / CCUG 17765 / NCTC 10094 / 16M)).